A 1854-amino-acid polypeptide reads, in one-letter code: MVPEDDQNLTDDPSKLGHNVVSLFDQTQTRYSPKAAIVCGEHTLTYGALASDSDRLACLLLSRGISRGHVVALALDRTPDLIMFILGVLKAGATYVPVDPALPPERVNQMLDDEALRLVIVSPVSTKGGAGTGRYDYGNKAVCCTTSELQDQMRYQADKRPAVDIQPDDIAYILYTSGSTGKPKGVEIHHAAICNYALSVHQRPGCTDQDRVLFKSTISFDMAAFEIYVPLLCGATVVQAQAHDIRDPRALMHLIDRHSVTFSVATPTILQMMLDSGWCGTPGFSKLVTGGEALSPRLAERLTACVEEVWNLYGPTETTASVAAWKVQVGEDILIGTPNPNTRLYVLDADLQPVPVGSTGELYISGAGVARGYRNNPERTKAAFLPDPFWEGHTMYKSGDLACFLDSRRLAVIGRADTQIKIRGQRIDPGDVEASITAHADIANAVVVNRDERLVAYCIRKPGVGSAEVPLAKLLRPWLEDRLPGYMVPSFFVEVDRFPSTLNGKVDLRALPDPISTITPAKIPASTLTQQLLAIWTDVLGHGQIGMQDSFFHIGGNSASIIQIQTKLEKLLGRPVPVPKLYEHFTIANLAAYLSDQTQTNEVTEETKNPAGNDTTGEDIAVISMACRLPGDIHTPEELWKALISGTDAVTRVPEERWDADAIYDPDPEARGKSYSTGGGFVRDAMDFDAQFFGISPREARAIDPAQTMILETCWEGFERAGYGTKSLRGSQTGVFIGTGNSSVDDGQLSAAGTEKFEGHLGLGTAPSSLSGRVAYALGLEGPTMTLDAGCAASLVATHVACSALRQGECDMAVAGGVTFLPSPGLHIEFSRIRVASPDGRSRPFSADAAGMGLGEGASAVVLKRLSDAQRDNDHIHAIIRGSAVNHGGRGASMTAPSGPGQKRVVRAALAAARLKPYDIDYVEAHGTGTRLGDPVEASALAEVFSSSRDDITGPLRIGSSKSNIAHTQAAAGLAGLIKVALAMQHTMLPQTLHSSQPSPLIDWVGGKLQLLQRPMAWLPRTNDPTAPRRAGINSFGLSGTNAHAIIEEPPRAHSNANGADDDDNDDNARLPLPLPFLLSAYTSEALRQQAQKLCNHLSSATAQTKLSDVSYSLATTRTHFPRRIILAAQDKTELMGRLASIIDNGVPATADNNKTARVAMLFSGQGTERARMGKGLAERHLVFRNTVSHIAELFESVLEKPLLDVMWAEPESEAASLLRRTDYAQPAIFTLQVALWRLWQSWGVQPAVVLGHSVGEIAAAHVAGIMNLADACRLVAARGKLMHALPESGSMVALEAGVDEVTSAIEQLSARDRVSIASINTPTQVVASGEMDVIDKLAAYFEAQNRSSKILKTSRAFHSHHLDESMLALLRAVAETIVFQEQTLPIVSTVTGKLAEPGQLSSADYWVRQARNPVLFAEGMQTLADQGANCFVELGPASTLCGMGASCLDGDLSQTSKVAGREGAKNLVWLHSLNPKSDDALVIHNSLSDLHIRKVEIDWAAFFKDIGGRRIQLPTYAFQRHRYWLDGLRPIYSDKSSGQPSGQSPSGCPQPTGQIQVGWHTIDASSQYSNSTWGLLCPASDAPWMSPVKEALLHAGKQPVTVNQLAEAKAMSGVLCFWESDSEDDMISKASEQLQTVSRMKFSPWVVWVTRGAVGAGNMGEASLWGVMRSARVKYPQLCLRIVDLEGDVNIATATKLCSILMMSTEPECVVLGERVLVPRMQFQMQAQVQEVQKHSKLCVNGQETTNGATAAADPNGTDSFENKIRMAGPEERAMMLQGLVRGITAKALGVATAEEVDMHQGFMDVGVGSLGAIQMRKELSAQTGVKLPANLTRVYPDPISLSDALQKQVEGQ.

The tract at residues 24-423 is adenylation (A) domain; the sequence is FDQTQTRYSP…GRADTQIKIR (400 aa). A Carrier 1 domain is found at 523–598; the sequence is IPASTLTQQL…NLAAYLSDQT (76 aa). The residue at position 558 (serine 558) is an O-(pantetheine 4'-phosphoryl)serine. In terms of domain architecture, Ketosynthase family 3 (KS3) spans 617 to 1049; the sequence is GEDIAVISMA…GTNAHAIIEE (433 aa). Active-site for beta-ketoacyl synthase activity residues include cysteine 791, histidine 926, and histidine 967. The tract at residues 1162–1496 is malonyl-CoA:ACP transacylase (MAT) domain; it reads LFSGQGTERA…SLSDLHIRKV (335 aa). A disordered region spans residues 1536-1556; sequence KSSGQPSGQSPSGCPQPTGQI. The segment covering 1537 to 1555 has biased composition (low complexity); the sequence is SSGQPSGQSPSGCPQPTGQ. A Carrier 2 domain is found at 1776–1851; it reads MMLQGLVRGI…SLSDALQKQV (76 aa). Serine 1811 is modified (O-(pantetheine 4'-phosphoryl)serine).

In the C-terminal section; belongs to the NRP synthetase family.

The protein operates within secondary metabolite biosynthesis. In terms of biological role, PKS-NRPS hybrid synthetase; part of the gene cluster that mediates the biosynthesis of pyrophen and campyrone B, which represent a class of fungal amino acid-derived alpha-pyrone natural products. The first step of pyrophen biosynthesis is catalyzed by the PKS-NRPS hybrid synthetase ATPKS that uptakes and condensates L-phenylalanine and malonyl-CoA in order to produce desmethyldesacetylpyrophen. Although the A domain does not discriminate between 2 enantiomeric phenylalanines, the downstream KS domain must play a gate keeping role to stereoselectively accept the L-phenylalanyl-S-phosphopantetheine (Ppant)-T domain intermediate for chain elongation. The resulting amino acid derived diketide is off-loaded through lactonization to yield the alpha-pyrone intermediate desmethyldesacetylpyrophen. The cluster-specific O-methyltransferase (OMT) then methylates desmethyldesacetylpyrophen to desacetylpyrophen, which is further acetylated to pyrophen by an endogenous yet unidentified N-acetyltransferase. ATPKS has relaxed substrate specificity to activate and extend branched-chain amino acid L-leucine to produce small amounts of campyrone B. The sequence is that of PKS-NRPS hybrid synthetase ATPKS from Aspergillus niger (strain ATCC 1015 / CBS 113.46 / FGSC A1144 / LSHB Ac4 / NCTC 3858a / NRRL 328 / USDA 3528.7).